Here is an 82-residue protein sequence, read N- to C-terminus: Small ribosomal subunit protein bS16 (82 aa).

This sequence belongs to the bacterial ribosomal protein bS16 family.

This Klebsiella pneumoniae subsp. pneumoniae (strain ATCC 700721 / MGH 78578) protein is Small ribosomal subunit protein bS16.